An 89-amino-acid polypeptide reads, in one-letter code: Small ribosomal subunit protein uS15 (89 aa).

A compositionally biased stretch (basic and acidic residues) spans 1–11 (MSITAERKAEV). The interval 1–25 (MSITAERKAEVIKTNARKSGDTGSP) is disordered.

It belongs to the universal ribosomal protein uS15 family. In terms of assembly, part of the 30S ribosomal subunit. Forms a bridge to the 50S subunit in the 70S ribosome, contacting the 23S rRNA.

In terms of biological role, one of the primary rRNA binding proteins, it binds directly to 16S rRNA where it helps nucleate assembly of the platform of the 30S subunit by binding and bridging several RNA helices of the 16S rRNA. Functionally, forms an intersubunit bridge (bridge B4) with the 23S rRNA of the 50S subunit in the ribosome. This chain is Small ribosomal subunit protein uS15, found in Nitrobacter hamburgensis (strain DSM 10229 / NCIMB 13809 / X14).